The chain runs to 60 residues: MNAKYDTDQGVGRMLFLGTIGLAVVVGGLMAYGYYYDGKTPSSGTSFHTASPSFSSRYRY.

A helical transmembrane segment spans residues 14–34 (MLFLGTIGLAVVVGGLMAYGY). The segment at 38–60 (GKTPSSGTSFHTASPSFSSRYRY) is disordered. Residues 40–60 (TPSSGTSFHTASPSFSSRYRY) show a composition bias toward polar residues.

It localises to the host membrane. This is an uncharacterized protein from Dryophytes versicolor (chameleon treefrog).